The chain runs to 151 residues: SsrA-binding protein (151 aa).

The disordered stretch occupies residues 132–151 (KRQTIKKRDQDREIHRKYGI).

It belongs to the SmpB family.

Its subcellular location is the cytoplasm. In terms of biological role, required for rescue of stalled ribosomes mediated by trans-translation. Binds to transfer-messenger RNA (tmRNA), required for stable association of tmRNA with ribosomes. tmRNA and SmpB together mimic tRNA shape, replacing the anticodon stem-loop with SmpB. tmRNA is encoded by the ssrA gene; the 2 termini fold to resemble tRNA(Ala) and it encodes a 'tag peptide', a short internal open reading frame. During trans-translation Ala-aminoacylated tmRNA acts like a tRNA, entering the A-site of stalled ribosomes, displacing the stalled mRNA. The ribosome then switches to translate the ORF on the tmRNA; the nascent peptide is terminated with the 'tag peptide' encoded by the tmRNA and targeted for degradation. The ribosome is freed to recommence translation, which seems to be the essential function of trans-translation. This chain is SsrA-binding protein, found in Lactobacillus gasseri (strain ATCC 33323 / DSM 20243 / BCRC 14619 / CIP 102991 / JCM 1131 / KCTC 3163 / NCIMB 11718 / NCTC 13722 / AM63).